The primary structure comprises 599 residues: Kelch repeat and BTB domain-containing protein 8 (599 aa).

Positions 1 to 25 (MAASADLSKSSPTPNGIPSSDTAND) are disordered. The span at 7–25 (LSKSSPTPNGIPSSDTAND) shows a compositional bias: polar residues. The region spanning 49–117 (TDIVVEVDHG…AYTSRVILTE (69 aa)) is the BTB domain. In terms of domain architecture, BACK spans 152–254 (SIGVFIFADH…MEDTFIEKIP (103 aa)). Kelch repeat units follow at residues 334–388 (DIYI…YCCG), 389–439 (KMYA…EHKE), 441–479 (IYVL…VYKD), 481–530 (IYYI…LFQN), and 540–586 (QVTV…FECA).

It belongs to the KBTBD8 family. In terms of assembly, component of the BCR(KBTBD8) E3 ubiquitin ligase complex, at least composed of CUL3, KBTBD8 and RBX1.

It localises to the cytoplasm. It is found in the cytoskeleton. Its subcellular location is the spindle. The protein resides in the golgi apparatus. Substrate-specific adapter of a BCR (BTB-CUL3-RBX1) E3 ubiquitin ligase complex that acts as a regulator of neural crest specification. The BCR(KBTBD8) complex acts by mediating monoubiquitination of NOLC1 and TCOF1: monoubiquitination promotes the formation of a NOLC1-TCOF1 complex that acts as a platform to connect RNA polymerase I with enzymes responsible for ribosomal processing and modification, leading to remodel the translational program of differentiating cells in favor of neural crest specification. This Mus musculus (Mouse) protein is Kelch repeat and BTB domain-containing protein 8 (Kbtbd8).